Consider the following 429-residue polypeptide: UDP-N-acetylglucosamine 1-carboxyvinyltransferase (429 aa).

22 to 23 (KN) contacts phosphoenolpyruvate. Arg-102 contacts UDP-N-acetyl-alpha-D-glucosamine. Catalysis depends on Cys-126, which acts as the Proton donor. At Cys-126 the chain carries 2-(S-cysteinyl)pyruvic acid O-phosphothioketal. Residues 131–135 (RPVDL), Asp-316, and Ile-338 each bind UDP-N-acetyl-alpha-D-glucosamine.

Belongs to the EPSP synthase family. MurA subfamily.

Its subcellular location is the cytoplasm. It catalyses the reaction phosphoenolpyruvate + UDP-N-acetyl-alpha-D-glucosamine = UDP-N-acetyl-3-O-(1-carboxyvinyl)-alpha-D-glucosamine + phosphate. The protein operates within cell wall biogenesis; peptidoglycan biosynthesis. Cell wall formation. Adds enolpyruvyl to UDP-N-acetylglucosamine. This Methylorubrum extorquens (strain CM4 / NCIMB 13688) (Methylobacterium extorquens) protein is UDP-N-acetylglucosamine 1-carboxyvinyltransferase.